The chain runs to 354 residues: tRNA N6-adenosine threonylcarbamoyltransferase (354 aa).

2 residues coordinate Fe cation: H115 and H119. Substrate-binding positions include 138 to 142, D171, G184, and N276; that span reads LVSGG. D304 serves as a coordination point for Fe cation.

It belongs to the KAE1 / TsaD family. The cofactor is Fe(2+).

Its subcellular location is the cytoplasm. It catalyses the reaction L-threonylcarbamoyladenylate + adenosine(37) in tRNA = N(6)-L-threonylcarbamoyladenosine(37) in tRNA + AMP + H(+). In terms of biological role, required for the formation of a threonylcarbamoyl group on adenosine at position 37 (t(6)A37) in tRNAs that read codons beginning with adenine. Is involved in the transfer of the threonylcarbamoyl moiety of threonylcarbamoyl-AMP (TC-AMP) to the N6 group of A37, together with TsaE and TsaB. TsaD likely plays a direct catalytic role in this reaction. The sequence is that of tRNA N6-adenosine threonylcarbamoyltransferase from Xanthomonas oryzae pv. oryzae (strain MAFF 311018).